The sequence spans 345 residues: Holliday junction branch migration complex subunit RuvB (345 aa).

The tract at residues methionine 1–serine 22 is disordered. Positions threonine 4–tyrosine 193 are large ATPase domain (RuvB-L). ATP is bound by residues leucine 32, arginine 33, glycine 74, lysine 77, threonine 78, threonine 79, glutamate 140–tyrosine 142, arginine 183, tyrosine 193, and arginine 230. Threonine 78 lines the Mg(2+) pocket. Residues threonine 194 to aspartate 264 form a small ATPAse domain (RuvB-S) region. The segment at proline 267–valine 345 is head domain (RuvB-H). Residues arginine 322 and arginine 327 each coordinate DNA.

The protein belongs to the RuvB family. Homohexamer. Forms an RuvA(8)-RuvB(12)-Holliday junction (HJ) complex. HJ DNA is sandwiched between 2 RuvA tetramers; dsDNA enters through RuvA and exits via RuvB. An RuvB hexamer assembles on each DNA strand where it exits the tetramer. Each RuvB hexamer is contacted by two RuvA subunits (via domain III) on 2 adjacent RuvB subunits; this complex drives branch migration. In the full resolvosome a probable DNA-RuvA(4)-RuvB(12)-RuvC(2) complex forms which resolves the HJ.

It localises to the cytoplasm. The enzyme catalyses ATP + H2O = ADP + phosphate + H(+). The RuvA-RuvB-RuvC complex processes Holliday junction (HJ) DNA during genetic recombination and DNA repair, while the RuvA-RuvB complex plays an important role in the rescue of blocked DNA replication forks via replication fork reversal (RFR). RuvA specifically binds to HJ cruciform DNA, conferring on it an open structure. The RuvB hexamer acts as an ATP-dependent pump, pulling dsDNA into and through the RuvAB complex. RuvB forms 2 homohexamers on either side of HJ DNA bound by 1 or 2 RuvA tetramers; 4 subunits per hexamer contact DNA at a time. Coordinated motions by a converter formed by DNA-disengaged RuvB subunits stimulates ATP hydrolysis and nucleotide exchange. Immobilization of the converter enables RuvB to convert the ATP-contained energy into a lever motion, pulling 2 nucleotides of DNA out of the RuvA tetramer per ATP hydrolyzed, thus driving DNA branch migration. The RuvB motors rotate together with the DNA substrate, which together with the progressing nucleotide cycle form the mechanistic basis for DNA recombination by continuous HJ branch migration. Branch migration allows RuvC to scan DNA until it finds its consensus sequence, where it cleaves and resolves cruciform DNA. The protein is Holliday junction branch migration complex subunit RuvB of Laribacter hongkongensis (strain HLHK9).